A 358-amino-acid chain; its full sequence is Magnesium-protoporphyrin IX monomethyl ester [oxidative] cyclase (358 aa).

This sequence belongs to the AcsF family. Fe cation is required as a cofactor.

It catalyses the reaction Mg-protoporphyrin IX 13-monomethyl ester + 3 NADPH + 3 O2 + 2 H(+) = 3,8-divinyl protochlorophyllide a + 3 NADP(+) + 5 H2O. It functions in the pathway porphyrin-containing compound metabolism; chlorophyll biosynthesis (light-independent). Functionally, catalyzes the formation of the isocyclic ring in chlorophyll biosynthesis. Mediates the cyclase reaction, which results in the formation of divinylprotochlorophyllide (Pchlide) characteristic of all chlorophylls from magnesium-protoporphyrin IX 13-monomethyl ester (MgPMME). In Synechococcus elongatus (strain ATCC 33912 / PCC 7942 / FACHB-805) (Anacystis nidulans R2), this protein is Magnesium-protoporphyrin IX monomethyl ester [oxidative] cyclase.